The following is a 593-amino-acid chain: Metal-response element-binding transcription factor 2 (593 aa).

The segment at methionine 1–threonine 24 is disordered. Residues valine 12–glutamine 22 are compositionally biased toward basic residues. Threonine 24 is modified (phosphothreonine). The region spanning cysteine 44–glycine 101 is the Tudor domain. 2 consecutive PHD-type zinc fingers follow at residues glutamate 102–alanine 157 and glutamine 201–glycine 255. Disordered stretches follow at residues valine 357–threonine 410 and glycine 444–glycine 486. Lysine 360 participates in a covalent cross-link: Glycyl lysine isopeptide (Lys-Gly) (interchain with G-Cter in SUMO2). Basic and acidic residues predominate over residues lysine 360–isoleucine 374. The segment covering histidine 447–isoleucine 470 has biased composition (polar residues). Position 452 is a phosphoserine (serine 452). A Glycyl lysine isopeptide (Lys-Gly) (interchain with G-Cter in SUMO2) cross-link involves residue lysine 522.

The protein belongs to the Polycomblike family. As to quaternary structure, associates with the PRC2 complex, which consists of the core components EED, EZH1 or EZH2, SUZ12, and RBBP4, and various combinations of accessory subunits including AEBP2, JARID2, PHF19, MTF2 and EPOP. Forms a dimeric PRC2.1 (class 1, PRC-PCL) complex consisting of at least SUZ12, RBBP4, and PHF19 or MTF2; PHF19 and MTF2 stabilize the dimeric structure which enhances PRC2 interaction with chromatin.

The protein resides in the nucleus. Its function is as follows. Polycomb group (PcG) protein that specifically binds histone H3 trimethylated at 'Lys-36' (H3K36me3) and recruits the PRC2 complex, thus enhancing PRC2 H3K27me3 methylation activity. Regulates the transcriptional networks during embryonic stem cell self-renewal and differentiation. Promotes recruitment of the PRC2 complex to the inactive X chromosome in differentiating XX ES cells and PRC2 recruitment to target genes in undifferentiated ES cells. Required to repress Hox genes by enhancing H3K27me3 methylation of the PRC2 complex. In some conditions may act as an inhibitor of PRC2 activity: able to activate the CDKN2A gene and promote cellular senescence by suppressing the catalytic activity of the PRC2 complex locally. Binds to the metal-regulating-element (MRE) of MT1A gene promoter. The sequence is that of Metal-response element-binding transcription factor 2 (Mtf2) from Mus musculus (Mouse).